The primary structure comprises 148 residues: Deoxyuridine 5'-triphosphate nucleotidohydrolase (148 aa).

Residues 67-69, Asn-80, 84-86, and Met-94 each bind substrate; these read RSG and LID.

This sequence belongs to the dUTPase family. Requires Mg(2+) as cofactor.

It carries out the reaction dUTP + H2O = dUMP + diphosphate + H(+). It participates in pyrimidine metabolism; dUMP biosynthesis; dUMP from dCTP (dUTP route): step 2/2. This enzyme is involved in nucleotide metabolism: it produces dUMP, the immediate precursor of thymidine nucleotides and it decreases the intracellular concentration of dUTP so that uracil cannot be incorporated into DNA. This chain is Deoxyuridine 5'-triphosphate nucleotidohydrolase, found in Francisella tularensis subsp. holarctica (strain FTNF002-00 / FTA).